The sequence spans 490 residues: Bifunctional protein GlmU (490 aa).

The segment at 1–241 (MSSPGDTAVL…SALVAGVNNR (241 aa)) is pyrophosphorylase. UDP-N-acetyl-alpha-D-glucosamine-binding positions include 12 to 15 (LAAG), Lys26, Gln83, 88 to 89 (GT), 112 to 114 (SGD), Gly151, Glu166, Asn181, and Asn239. Residue Asp114 participates in Mg(2+) binding. Position 239 (Asn239) interacts with Mg(2+). The linker stretch occupies residues 242 to 262 (VQLAQLGAELNRRIVAAHQLA). The tract at residues 263–490 (GVTVVDPATT…AGGRPAGEAE (228 aa)) is N-acetyltransferase. UDP-N-acetyl-alpha-D-glucosamine-binding residues include Arg344 and Lys362. His374 (proton acceptor) is an active-site residue. UDP-N-acetyl-alpha-D-glucosamine contacts are provided by Tyr377 and Asn388. Acetyl-CoA contacts are provided by residues Ala391, 397 to 398 (NY), Ser416, and Ala434. The interval 462–490 (RRKRPGSAAARAAEAAEKAAGGRPAGEAE) is disordered. The span at 467-490 (GSAAARAAEAAEKAAGGRPAGEAE) shows a compositional bias: low complexity.

It in the N-terminal section; belongs to the N-acetylglucosamine-1-phosphate uridyltransferase family. The protein in the C-terminal section; belongs to the transferase hexapeptide repeat family. As to quaternary structure, homotrimer. It depends on Mg(2+) as a cofactor.

Its subcellular location is the cytoplasm. The catalysed reaction is alpha-D-glucosamine 1-phosphate + acetyl-CoA = N-acetyl-alpha-D-glucosamine 1-phosphate + CoA + H(+). It carries out the reaction N-acetyl-alpha-D-glucosamine 1-phosphate + UTP + H(+) = UDP-N-acetyl-alpha-D-glucosamine + diphosphate. It functions in the pathway nucleotide-sugar biosynthesis; UDP-N-acetyl-alpha-D-glucosamine biosynthesis; N-acetyl-alpha-D-glucosamine 1-phosphate from alpha-D-glucosamine 6-phosphate (route II): step 2/2. The protein operates within nucleotide-sugar biosynthesis; UDP-N-acetyl-alpha-D-glucosamine biosynthesis; UDP-N-acetyl-alpha-D-glucosamine from N-acetyl-alpha-D-glucosamine 1-phosphate: step 1/1. It participates in bacterial outer membrane biogenesis; LPS lipid A biosynthesis. In terms of biological role, catalyzes the last two sequential reactions in the de novo biosynthetic pathway for UDP-N-acetylglucosamine (UDP-GlcNAc). The C-terminal domain catalyzes the transfer of acetyl group from acetyl coenzyme A to glucosamine-1-phosphate (GlcN-1-P) to produce N-acetylglucosamine-1-phosphate (GlcNAc-1-P), which is converted into UDP-GlcNAc by the transfer of uridine 5-monophosphate (from uridine 5-triphosphate), a reaction catalyzed by the N-terminal domain. The polypeptide is Bifunctional protein GlmU (Mycobacterium avium (strain 104)).